The sequence spans 666 residues: Endogenous retrovirus group K member 21 Gag polyprotein (666 aa).

A lipid anchor (N-myristoyl glycine) is attached at G2. Disordered regions lie at residues 165–189 and 217–264; these read GKGPELVGPSESKPRGTSPLPAGQV and ELQY…GSEL. Positions 232–247 are enriched in pro residues; it reads GMPPAPQGRAPYPQPP. CCHC-type zinc fingers lie at residues 544 to 561 and 580 to 597; these read GKCYNCGQIGHLKKNCPV and DLCPRCKKGKHWASQCRS. Residues 598–641 form a disordered region; the sequence is KFDKNGQPLSGNEQRGQPQAPQQTGAFPIQPFVPQGFQGQQPPL. The segment covering 604–622 has biased composition (polar residues); the sequence is QPLSGNEQRGQPQAPQQTG. Residues 624–640 are compositionally biased toward low complexity; that stretch reads FPIQPFVPQGFQGQQPP.

Belongs to the beta type-B retroviral Gag protein family. HERV class-II K(HML-2) gag subfamily. In terms of processing, myristoylation is essential for retroviral assembly. Alteration of the glycine residue leads to a block in the budding of particles and an accumulation of Gag inside the cell. Specific enzymatic cleavages may yield mature proteins.

It localises to the cell membrane. In terms of biological role, the products of the Gag polyproteins of infectious retroviruses perform highly complex orchestrated tasks during the assembly, budding, maturation, and infection stages of the viral replication cycle. During viral assembly, the proteins form membrane associations and self-associations that ultimately result in budding of an immature virion from the infected cell. Gag precursors also function during viral assembly to selectively bind and package two plus strands of genomic RNA. Endogenous Gag proteins may have kept, lost or modified their original function during evolution. This Homo sapiens (Human) protein is Endogenous retrovirus group K member 21 Gag polyprotein (ERVK-21).